Consider the following 348-residue polypeptide: Fructose-1,6-bisphosphatase class 1 2 (348 aa).

Residues glutamate 93, aspartate 117, leucine 119, and aspartate 120 each coordinate Mg(2+). Substrate contacts are provided by residues 120–123 (DGSS), asparagine 213, tyrosine 244, and lysine 274. Residue glutamate 280 coordinates Mg(2+).

It belongs to the FBPase class 1 family. As to quaternary structure, homotetramer. Mg(2+) serves as cofactor.

Its subcellular location is the cytoplasm. The catalysed reaction is beta-D-fructose 1,6-bisphosphate + H2O = beta-D-fructose 6-phosphate + phosphate. Its pathway is carbohydrate biosynthesis; gluconeogenesis. In Christiangramia forsetii (strain DSM 17595 / CGMCC 1.15422 / KT0803) (Gramella forsetii), this protein is Fructose-1,6-bisphosphatase class 1 2.